A 226-amino-acid polypeptide reads, in one-letter code: tRNA (guanine-N(1)-)-methyltransferase (226 aa).

S-adenosyl-L-methionine contacts are provided by residues glycine 112 and 132–137 (IGDYVL).

This sequence belongs to the RNA methyltransferase TrmD family. As to quaternary structure, homodimer.

The protein resides in the cytoplasm. The enzyme catalyses guanosine(37) in tRNA + S-adenosyl-L-methionine = N(1)-methylguanosine(37) in tRNA + S-adenosyl-L-homocysteine + H(+). Functionally, specifically methylates guanosine-37 in various tRNAs. This chain is tRNA (guanine-N(1)-)-methyltransferase, found in Christiangramia forsetii (strain DSM 17595 / CGMCC 1.15422 / KT0803) (Gramella forsetii).